The following is a 69-amino-acid chain: Large ribosomal subunit protein bL31 (69 aa).

Zn(2+)-binding residues include Cys-16, Cys-18, Cys-37, and Cys-40.

The protein belongs to the bacterial ribosomal protein bL31 family. Type A subfamily. Part of the 50S ribosomal subunit. Requires Zn(2+) as cofactor.

Its function is as follows. Binds the 23S rRNA. The polypeptide is Large ribosomal subunit protein bL31 (Syntrophotalea carbinolica (strain DSM 2380 / NBRC 103641 / GraBd1) (Pelobacter carbinolicus)).